The sequence spans 111 residues: DNA-directed RNA polymerase subunit Rpo11 (111 aa).

The protein belongs to the archaeal Rpo11/eukaryotic RPB11/RPC19 RNA polymerase subunit family. In terms of assembly, part of the RNA polymerase complex.

The protein localises to the cytoplasm. The enzyme catalyses RNA(n) + a ribonucleoside 5'-triphosphate = RNA(n+1) + diphosphate. In terms of biological role, DNA-dependent RNA polymerase (RNAP) catalyzes the transcription of DNA into RNA using the four ribonucleoside triphosphates as substrates. This Thermoplasma volcanium (strain ATCC 51530 / DSM 4299 / JCM 9571 / NBRC 15438 / GSS1) protein is DNA-directed RNA polymerase subunit Rpo11.